A 1661-amino-acid polypeptide reads, in one-letter code: MATDGASCEPDFSRASEDAAEATAEATAEAAKKEFDVDTLSKSELRMLLSVMEGELEARDLVIEALRARRKEVFIQERYGRFNLNDPFLALQRDYEAGAREKEKKPVCTNPLSILEAVMAHCRKMQERMSTQLAAAESRQKKLEMEKLQLQALEQEHKKLAARLEEERGKNKHVVLMLVKECKQLSGKVIEEAQKVEEVMAQLEEEKKRTNELEEELSTEKRRSTEMEAQMEKQLSEFDTEREQLRAKLNREEAHTTDLKEEIDKMKKMIEQLKRGNDSKPSLSLPRKVKDRRLVSVSVGTEGPVTRSVACQTDLVVESTDHVKKLPLTVPVKPSAGSPLVSASAKGNVVRPSVDRQASHGDLILSSVPTVPPPSVNKTEENGPSTGSTPDLPSSTPPLPNNTAPPAVQPPSIASQNYSQASSLHSLHSPCANASLHPGVNPRIQAVRFRFQGNANDQDQNGNTTQSPPSRDVSPTSRDNLVAKQLARNTVTQALSRFTGPQVGASARPGAPTTGDISTHPPVGRTSLKTSGVARVDRGNPPPIPPKKPGLSQTPSPPHPQLKVIMDSSRASNAGAKVDKTVASPPTSLPQGNRVINEENLPKSSSPQLPPKPSIDLTVAPAGCAVSALATSQVGAWRAETPGLNQPACSDSSLVIPTTIAFCSSINPVSASSCRPGASDSLLVTASGWSPSLTPLLMSGGPAPLAGRPTLLQQAAAQGNVTLLSMLLNEEGLDINYSCEDGHSALYSAAKNGHTDCVRLLLNAEAQVNAADKNGFTPLCAAAAQGHDKCVELLIAYRANINHAADGGQTPLYLACKNGNKECIKLLLEAGTDRSVKTRDGWTPVHAAVDTGNVDSLKLLMYHRAPACGDRLNEEEPESDVFDLDGGGERPEGTVKPVVPADLINHADREGWTAAHIAASKGFKNCLEILCQHGGLEPERNDKCNRTVHDVATDDCKHLLENLNALKIPLRISMSETQRDSFGSDDFECENTIWALTIRRQTSWDDFSKGVIQALTNHFQAISSDGWWSLEDVTFNNTTESSIGLGASSVLSIMLGSVSWSPGQSFAQSPWDFLKKNKAEQVTVLLSGPQEGCLSSVTYASMIPLPMLQNYLRLVEQYHNVIFHGPEGSLQDYIAHQLALCMKHRQMAVGFSCEIVRAEVDAAFCKEQLVDLFIRNACLIPVKQSPGNKKVIVILENLEKSSLSELLGDFLAPLENRSTESPCTFQKGNGTSECYYFHENCFLMGTIAKACLQGSDLLVQQHFRWVQLRWDGEPMQGLLQRFLRRKAVNKFRGKLSSPRDPVCKTVDWALSVWRQLNSCLARLGTPEALLGPKYFLSCPVVPGHAQATVKWMSKLWNAVIAPRVQEAILSKASVKRQPGLGQTNAKKHPSQGQQAVVKAALSILLNKAVLHGCPLPRAELDQYIAEFKGGSFPLSIVSSYSSCGKKKGENGAWRKVSTSPRKKSGRFPSPTWSKPDLSDEGIKNKTVSQLNCNRNASLSRQKCLENDLSLTLNLDQRLSLGSDDEADLVKELQSMCSSKSESDISKIADSRDDLRRFDSSRNSPAFSATVNNPRMPVSQKEVSPLSSHQTTECSNSKLKTELGVSRVKSFLPVPRSKVAQCSQNTRRSSSSSNTRQIEINNNSKDEIWNLRKNEQVEKPNK.

Disordered regions lie at residues 1-27 (MATDGASCEPDFSRASEDAAEATAEAT), 206-226 (EKKRTNELEEELSTEKRRSTE), 329-438 (TVPV…SLHP), 454-477 (NANDQDQNGNTTQSPPSRDVSPTS), and 493-612 (QALS…LPPK). Residues 124–280 (KMQERMSTQL…EQLKRGNDSK (157 aa)) adopt a coiled-coil conformation. A compositionally biased stretch (low complexity) spans 383–394 (GPSTGSTPDLPS). A compositionally biased stretch (polar residues) spans 412–426 (SIASQNYSQASSLHS). Residues 454-466 (NANDQDQNGNTTQ) show a composition bias toward low complexity. The span at 467 to 477 (SPPSRDVSPTS) shows a compositional bias: polar residues. Residue arginine 497 is modified to Asymmetric dimethylarginine. ANK repeat units follow at residues 707–737 (GRPTLLQQAAAQGNVTLLSMLLNEEGLDINY), 741–770 (DGHSALYSAAKNGHTDCVRLLLNAEAQVNA), 774–803 (NGFTPLCAAAAQGHDKCVELLIAYRANINH), 807–836 (GGQTPLYLACKNGNKECIKLLLEAGTDRSV), and 840–869 (DGWTPVHAAVDTGNVDSLKLLMYHRAPACG). Positions 876–896 (EPESDVFDLDGGGERPEGTVK) are disordered. Residues 910-940 (EGWTAAHIAASKGFKNCLEILCQHGGLEPER) form an ANK 6 repeat. Residues 1444 to 1480 (GKKKGENGAWRKVSTSPRKKSGRFPSPTWSKPDLSDE) form a disordered region. A Phosphoserine modification is found at serine 1522. Disordered stretches follow at residues 1555–1597 (RRFD…SNSK) and 1614–1661 (PRSK…KPNK). The span at 1580 to 1597 (KEVSPLSSHQTTECSNSK) shows a compositional bias: polar residues. The span at 1622 to 1636 (SQNTRRSSSSSNTRQ) shows a compositional bias: low complexity. The segment covering 1643–1661 (SKDEIWNLRKNEQVEKPNK) has biased composition (basic and acidic residues).

Interacts with CTTN/cortactin SH3 domain. Interacts with STRN, STRN4/zinedin and MOB4/phocein; this interactions mediate the association with the STRIPAK core complex and may regulate dendritic spine distribution of the STRIPAK complex in hippocampal neurons. Activation of glutamate receptors weakens the interaction with STRN and STRN4.

It localises to the cytoplasm. It is found in the cell cortex. Its subcellular location is the cell projection. The protein resides in the dendritic spine. In terms of biological role, regulates the dendritic spine distribution of CTTN/cortactin in hippocampal neurons, and thus controls dendritic spinogenesis and dendritic spine maintenance. Associates with the striatin-interacting phosphatase and kinase (STRIPAK) core complex to regulate dendritic spine distribution of the STRIPAK complex in hippocampal neurons. In Loxodonta africana (African elephant), this protein is Cortactin-binding protein 2 (CTTNBP2).